The chain runs to 100 residues: NADH-quinone oxidoreductase subunit K (100 aa).

The next 3 membrane-spanning stretches (helical) occupy residues 2–22 (ITLTHYLILSAILFSIALVGI), 29–49 (LMLFFATEIALNAVNIALAAF), and 63–83 (FFIIAIAASEVAVGLGLLIIW).

Belongs to the complex I subunit 4L family. In terms of assembly, NDH-1 is composed of 14 different subunits. Subunits NuoA, H, J, K, L, M, N constitute the membrane sector of the complex.

It localises to the cell inner membrane. The enzyme catalyses a quinone + NADH + 5 H(+)(in) = a quinol + NAD(+) + 4 H(+)(out). Its function is as follows. NDH-1 shuttles electrons from NADH, via FMN and iron-sulfur (Fe-S) centers, to quinones in the respiratory chain. The immediate electron acceptor for the enzyme in this species is believed to be ubiquinone. Couples the redox reaction to proton translocation (for every two electrons transferred, four hydrogen ions are translocated across the cytoplasmic membrane), and thus conserves the redox energy in a proton gradient. In Nitratiruptor sp. (strain SB155-2), this protein is NADH-quinone oxidoreductase subunit K.